Consider the following 615-residue polypeptide: Isocitrate dehydrogenase kinase/phosphatase (615 aa).

ATP is bound by residues 328–334 and K349; that span reads APGIRGL. D384 is a catalytic residue. Residues 595–615 form a disordered region; that stretch reads AEPPATPPVKQPDAGPARRVA.

This sequence belongs to the AceK family.

It is found in the cytoplasm. The catalysed reaction is L-seryl-[isocitrate dehydrogenase] + ATP = O-phospho-L-seryl-[isocitrate dehydrogenase] + ADP + H(+). In terms of biological role, bifunctional enzyme which can phosphorylate or dephosphorylate isocitrate dehydrogenase (IDH) on a specific serine residue. This is a regulatory mechanism which enables bacteria to bypass the Krebs cycle via the glyoxylate shunt in response to the source of carbon. When bacteria are grown on glucose, IDH is fully active and unphosphorylated, but when grown on acetate or ethanol, the activity of IDH declines drastically concomitant with its phosphorylation. The protein is Isocitrate dehydrogenase kinase/phosphatase of Cupriavidus taiwanensis (strain DSM 17343 / BCRC 17206 / CCUG 44338 / CIP 107171 / LMG 19424 / R1) (Ralstonia taiwanensis (strain LMG 19424)).